We begin with the raw amino-acid sequence, 401 residues long: Argininosuccinate synthase (401 aa).

8–16 is a binding site for ATP; that stretch reads AYSGGLDTS. L-citrulline is bound at residue Tyr-87. Gly-117 contributes to the ATP binding site. The L-aspartate site is built by Thr-119, Asn-123, and Asp-124. Asn-123 serves as a coordination point for L-citrulline. Arg-127, Ser-175, Glu-259, and Tyr-271 together coordinate L-citrulline.

This sequence belongs to the argininosuccinate synthase family. Type 1 subfamily. In terms of assembly, homotetramer.

Its subcellular location is the cytoplasm. The enzyme catalyses L-citrulline + L-aspartate + ATP = 2-(N(omega)-L-arginino)succinate + AMP + diphosphate + H(+). Its pathway is amino-acid biosynthesis; L-arginine biosynthesis; L-arginine from L-ornithine and carbamoyl phosphate: step 2/3. The protein is Argininosuccinate synthase of Pseudarthrobacter chlorophenolicus (strain ATCC 700700 / DSM 12829 / CIP 107037 / JCM 12360 / KCTC 9906 / NCIMB 13794 / A6) (Arthrobacter chlorophenolicus).